Consider the following 236-residue polypeptide: Purine nucleoside phosphorylase DeoD-type 2 (236 aa).

His-5 is an a purine D-ribonucleoside binding site. Phosphate is bound by residues Gly-21, Arg-25, Arg-44, and 88 to 91 (RVGS). A purine D-ribonucleoside is bound by residues 180 to 182 (DME) and 204 to 205 (SD). The Proton donor role is filled by Asp-205.

It belongs to the PNP/UDP phosphorylase family. Homohexamer; trimer of homodimers.

The enzyme catalyses a purine D-ribonucleoside + phosphate = a purine nucleobase + alpha-D-ribose 1-phosphate. It catalyses the reaction a purine 2'-deoxy-D-ribonucleoside + phosphate = a purine nucleobase + 2-deoxy-alpha-D-ribose 1-phosphate. Functionally, catalyzes the reversible phosphorolytic breakdown of the N-glycosidic bond in the beta-(deoxy)ribonucleoside molecules, with the formation of the corresponding free purine bases and pentose-1-phosphate. The sequence is that of Purine nucleoside phosphorylase DeoD-type 2 from Vibrio vulnificus (strain CMCP6).